We begin with the raw amino-acid sequence, 473 residues long: UDP-N-acetylmuramate--L-alanine ligase (473 aa).

Residue 115-121 (GTHGKTT) coordinates ATP.

It belongs to the MurCDEF family.

The protein localises to the cytoplasm. The enzyme catalyses UDP-N-acetyl-alpha-D-muramate + L-alanine + ATP = UDP-N-acetyl-alpha-D-muramoyl-L-alanine + ADP + phosphate + H(+). It participates in cell wall biogenesis; peptidoglycan biosynthesis. Its function is as follows. Cell wall formation. The sequence is that of UDP-N-acetylmuramate--L-alanine ligase from Rhizorhabdus wittichii (strain DSM 6014 / CCUG 31198 / JCM 15750 / NBRC 105917 / EY 4224 / RW1) (Sphingomonas wittichii).